A 144-amino-acid chain; its full sequence is Large ribosomal subunit protein uL15 (144 aa).

The tract at residues 1–60 is disordered; sequence MRLNSLRPAAGSRPDANRVGRGAGTGNGKTAGRGHKGQHSRSGGFTKVGFEGGQMPLQRR. The span at 21–31 shows a compositional bias: gly residues; it reads RGAGTGNGKTA.

Belongs to the universal ribosomal protein uL15 family. In terms of assembly, part of the 50S ribosomal subunit.

In terms of biological role, binds to the 23S rRNA. The protein is Large ribosomal subunit protein uL15 of Alkalilimnicola ehrlichii (strain ATCC BAA-1101 / DSM 17681 / MLHE-1).